Here is a 364-residue protein sequence, read N- to C-terminus: Anthranilate N-methyltransferase (364 aa).

Residues 1–20 (MGSLSESHTQYKHGVEVEED) are disordered. Residues glycine 209, aspartate 232, methionine 253, and lysine 266 each contribute to the S-adenosyl-L-methionine site. Catalysis depends on histidine 270, which acts as the Proton acceptor.

It belongs to the class I-like SAM-binding methyltransferase superfamily. Cation-independent O-methyltransferase family. COMT subfamily. Homodimer. As to expression, expressed in leaves, flowers, stems and roots. Detected in the vascular tissues in stems, in the rhizodermis or the endodermis of roots, in the inside of carpels, in the central vascular bundles of the syncarp ovary and in the secretory oil glands located around the outer ovary wall.

It catalyses the reaction anthranilate + S-adenosyl-L-methionine = N-methylanthranilate + S-adenosyl-L-homocysteine + H(+). Inhibited by Ca(2+), Co(2+), Fe(2+), Fe(3+), Cu(2+) or Zn(2+). No effect of Mg(2+). Involved in the biosynthesis of acridine alkaloids. N-methyltransferase with a strict substrate specificity for anthranilate. No activity with anthranilic acid methyl ester, anthraniloyl CoA, 3- or 4-amino-benzoic acid, salicylic acid, catechol, eugenol, caffeic acid, quercetin, theobromin, theophyllin, putrescine and nicotinic acid among others. The sequence is that of Anthranilate N-methyltransferase from Ruta graveolens (Common rue).